Reading from the N-terminus, the 246-residue chain is Myelin protein P0 (246 aa).

Positions 1 to 27 (MFRDLKPAYLFCCSVLYAFSVLRPSQG) are cleaved as a signal peptide. The Ig-like V-type domain maps to 28–143 (ISVSTHHNLH…VGTSSDVHLT (116 aa)). Over 28–150 (ISVSTHHNLH…HLTVYDKIPP (123 aa)) the chain is Extracellular. Cysteine 48 and cysteine 125 are disulfide-bonded. Asparagine 120 carries N-linked (GlcNAc...) (complex) asparagine glycosylation. Residues 151 to 178 (VGAGVVSGAIIGTFLGIILLIVGGLYLF) form a helical membrane-spanning segment. Over 179-246 (RYIVRRRARS…KLSESKRDKK (68 aa)) the chain is Cytoplasmic. The segment at 200-246 (AERGKVSGKAGTVSKGPVLYATLDQSKSGKGASEKKSKLSESKRDKK) is disordered. A compositionally biased stretch (basic and acidic residues) spans 231–246 (ASEKKSKLSESKRDKK).

It belongs to the myelin P0 protein family. N-glycan is sulfated. In terms of tissue distribution, found only in peripheral nervous system Schwann cells.

The protein resides in the cell membrane. Creation of an extracellular membrane face which guides the wrapping process and ultimately compacts adjacent lamellae. This is Myelin protein P0 (mpz) from Heterodontus francisci (Horn shark).